Consider the following 482-residue polypeptide: tRNA sulfurtransferase (482 aa).

Residues 61–165 enclose the THUMP domain; it reads LAIRDALTRI…DDRLLLIKGR (105 aa). Residues 183 to 184, lysine 265, glycine 287, and glutamine 296 each bind ATP; that span reads LI. A disulfide bond links cysteine 344 and cysteine 456. The region spanning 404–482 is the Rhodanese domain; the sequence is FGPNDVILDI…GFNNVKVYRP (79 aa). The active-site Cysteine persulfide intermediate is cysteine 456.

This sequence belongs to the ThiI family.

It localises to the cytoplasm. The catalysed reaction is [ThiI sulfur-carrier protein]-S-sulfanyl-L-cysteine + a uridine in tRNA + 2 reduced [2Fe-2S]-[ferredoxin] + ATP + H(+) = [ThiI sulfur-carrier protein]-L-cysteine + a 4-thiouridine in tRNA + 2 oxidized [2Fe-2S]-[ferredoxin] + AMP + diphosphate. It carries out the reaction [ThiS sulfur-carrier protein]-C-terminal Gly-Gly-AMP + S-sulfanyl-L-cysteinyl-[cysteine desulfurase] + AH2 = [ThiS sulfur-carrier protein]-C-terminal-Gly-aminoethanethioate + L-cysteinyl-[cysteine desulfurase] + A + AMP + 2 H(+). It participates in cofactor biosynthesis; thiamine diphosphate biosynthesis. Catalyzes the ATP-dependent transfer of a sulfur to tRNA to produce 4-thiouridine in position 8 of tRNAs, which functions as a near-UV photosensor. Also catalyzes the transfer of sulfur to the sulfur carrier protein ThiS, forming ThiS-thiocarboxylate. This is a step in the synthesis of thiazole, in the thiamine biosynthesis pathway. The sulfur is donated as persulfide by IscS. This is tRNA sulfurtransferase from Shigella sonnei (strain Ss046).